Consider the following 252-residue polypeptide: uncharacterized protein (252 aa).

It belongs to the methyltransferase superfamily.

This is an uncharacterized protein from Mycobacterium sp. (strain KMS).